Consider the following 302-residue polypeptide: Coiled-coil domain-containing protein 2 (302 aa).

Positions 1-22 are cleaved as a signal peptide; it reads MKNFGLLVVCLSLATLVIPSDG. Positions 198 to 234 form a coiled coil; sequence FADAMEKKAEALENAAEAAAEYISDQSEEVDDLSEEV. The tract at residues 221 to 257 is disordered; the sequence is SDQSEEVDDLSEEVLDDDSDENDSTSSESEVEDSDVD. Over residues 223-257 the composition is skewed to acidic residues; that stretch reads QSEEVDDLSEEVLDDDSDENDSTSSESEVEDSDVD. Asn242 carries N-linked (GlcNAc...) asparagine glycosylation.

In terms of tissue distribution, component of the acid-insoluble organic matrix of calcified layers of the shell (at protein level).

The protein localises to the secreted. The protein is Coiled-coil domain-containing protein 2 of Lottia gigantea (Giant owl limpet).